The chain runs to 883 residues: Alanine--tRNA ligase (883 aa).

Residues histidine 562, histidine 566, cysteine 675, and histidine 679 each contribute to the Zn(2+) site.

It belongs to the class-II aminoacyl-tRNA synthetase family. It depends on Zn(2+) as a cofactor.

Its subcellular location is the cytoplasm. It catalyses the reaction tRNA(Ala) + L-alanine + ATP = L-alanyl-tRNA(Ala) + AMP + diphosphate. Catalyzes the attachment of alanine to tRNA(Ala) in a two-step reaction: alanine is first activated by ATP to form Ala-AMP and then transferred to the acceptor end of tRNA(Ala). Also edits incorrectly charged Ser-tRNA(Ala) and Gly-tRNA(Ala) via its editing domain. This Ruegeria sp. (strain TM1040) (Silicibacter sp.) protein is Alanine--tRNA ligase.